Consider the following 146-residue polypeptide: Anti-sigma F factor (146 aa).

This sequence belongs to the anti-sigma-factor family.

It catalyses the reaction L-seryl-[protein] + ATP = O-phospho-L-seryl-[protein] + ADP + H(+). It carries out the reaction L-threonyl-[protein] + ATP = O-phospho-L-threonyl-[protein] + ADP + H(+). Its function is as follows. Binds to sigma F and blocks its ability to form an RNA polymerase holoenzyme (E-sigma F). Phosphorylates SpoIIAA on a serine residue. This phosphorylation may enable SpoIIAA to act as an anti-anti-sigma factor that counteracts SpoIIAB and thus releases sigma F from inhibition. This Geobacillus sp. (strain WCH70) protein is Anti-sigma F factor.